Here is a 145-residue protein sequence, read N- to C-terminus: Bacilliredoxin BH2759 (145 aa).

The protein belongs to the bacilliredoxin family.

This Halalkalibacterium halodurans (strain ATCC BAA-125 / DSM 18197 / FERM 7344 / JCM 9153 / C-125) (Bacillus halodurans) protein is Bacilliredoxin BH2759.